The sequence spans 323 residues: Non-structural protein 9 (323 aa).

Residues 1–142 (MFTSSAAKTG…GGSRPSQERG (142 aa)) are disordered. Over residues 33–49 (IDGSISSGPISTGPDSD) the composition is skewed to low complexity. The span at 99–115 (PNHTDIGTSLGQVTTKG) shows a compositional bias: polar residues.

The protein resides in the host cytoplasm. Its function is as follows. Constituent of viral factories. The chain is Non-structural protein 9 from Rice gall dwarf virus (RGDV).